A 334-amino-acid polypeptide reads, in one-letter code: Succinylglutamate desuccinylase (334 aa).

Residues histidine 59, glutamate 62, and histidine 151 each coordinate Zn(2+). Residue glutamate 215 is part of the active site.

Belongs to the AspA/AstE family. Succinylglutamate desuccinylase subfamily. The cofactor is Zn(2+).

The catalysed reaction is N-succinyl-L-glutamate + H2O = L-glutamate + succinate. It functions in the pathway amino-acid degradation; L-arginine degradation via AST pathway; L-glutamate and succinate from L-arginine: step 5/5. Functionally, transforms N(2)-succinylglutamate into succinate and glutamate. This chain is Succinylglutamate desuccinylase, found in Pseudomonas fluorescens (strain SBW25).